A 54-amino-acid polypeptide reads, in one-letter code: Protein GndA (54 aa).

A helical membrane pass occupies residues 28-50; the sequence is LFVVIVSFQQRALTSSVPVFLAV.

The protein resides in the cell inner membrane. This chain is Protein GndA, found in Escherichia coli (strain K12).